A 190-amino-acid chain; its full sequence is Acyl-acyl carrier protein thioesterase ATL3, chloroplastic (190 aa).

Residues 1-49 (MFLQVTGTATPAMPAVVFLNSWRRPLSIPLRSVKTFKPLAFFDLKGGKG) constitute a chloroplast transit peptide. Aspartate 66 is a catalytic residue.

It belongs to the 4-hydroxybenzoyl-CoA thioesterase family. In terms of tissue distribution, highly expressed in stems and flowers and at lower levels in rosette leaves, cauline leaves and siliques.

It is found in the plastid. Its subcellular location is the chloroplast. Acyl-ACP thioesterase involved in the production of fatty acids and beta-keto fatty acids. Can produce fatty acids of long chain (14:1 and 16:1) and beta-keto fatty acids of medium to long chain (8:0, 10:0, 12:0, 12:1, 14:0 and 16:0) when expressed in a heterologous organism (E.coli). Possesses thioesterase activity for lauroyl-ACP (12:0-ACP) in vitro. May play a role in the generation of long fatty acids in the chloroplast. The sequence is that of Acyl-acyl carrier protein thioesterase ATL3, chloroplastic from Arabidopsis thaliana (Mouse-ear cress).